A 295-amino-acid polypeptide reads, in one-letter code: GTPase Era (295 aa).

In terms of domain architecture, Era-type G spans 7–176 (KTVSVCIIGR…ITSKAKIAPW (170 aa)). Residues 15–22 (GRPNSGKS) form a G1 region. 15–22 (GRPNSGKS) is a binding site for GTP. The tract at residues 41-45 (QTTRS) is G2. The G3 stretch occupies residues 62 to 65 (DTPG). GTP is bound by residues 62 to 66 (DTPGI) and 124 to 127 (NKID). The interval 124 to 127 (NKID) is G4. Residues 152–154 (ISA) are G5. The KH type-2 domain occupies 204-281 (LQQELPYKLT…HLFLFVKVRE (78 aa)).

It belongs to the TRAFAC class TrmE-Era-EngA-EngB-Septin-like GTPase superfamily. Era GTPase family. As to quaternary structure, monomer.

It is found in the cytoplasm. Its subcellular location is the cell inner membrane. An essential GTPase that binds both GDP and GTP, with rapid nucleotide exchange. Plays a role in 16S rRNA processing and 30S ribosomal subunit biogenesis and possibly also in cell cycle regulation and energy metabolism. This is GTPase Era from Rickettsia bellii (strain OSU 85-389).